The following is a 321-amino-acid chain: Putative pyridoxal kinase (321 aa).

The substrate site is built by serine 23 and tyrosine 144. ATP is bound by residues 203–204 (TS) and 230–242 (TFPR…VGTG). Position 243 (aspartate 243) interacts with substrate.

It belongs to the pyridoxine kinase family. Zn(2+) is required as a cofactor. Mg(2+) serves as cofactor.

It catalyses the reaction pyridoxal + ATP = pyridoxal 5'-phosphate + ADP + H(+). Required for synthesis of pyridoxal-5-phosphate from vitamin B6. The sequence is that of Putative pyridoxal kinase from Caenorhabditis elegans.